Here is a 613-residue protein sequence, read N- to C-terminus: Na(+)/H(+) antiporter NhaA 1 (613 aa).

Residues Met1–Arg24 form a disordered region. Residues Met1–Val408 form a na(+)/H(+) antiporter NhaA region. A run of 11 helical transmembrane segments spans residues Ala29–Trp49, Gly81–Gly101, Ala110–Phe130, Gln138–Ile158, Ile168–Phe188, Asp191–Val211, Ile231–Ile251, Ala300–Val320, Trp337–Leu357, Gly377–Ile397, and Val408–Thr428. One can recognise a Thioredoxin domain in the interval Gly409–Arg613.

In the N-terminal section; belongs to the NhaA Na(+)/H(+) (TC 2.A.33) antiporter family.

The protein resides in the cell membrane. The catalysed reaction is Na(+)(in) + 2 H(+)(out) = Na(+)(out) + 2 H(+)(in). Functionally, na(+)/H(+) antiporter that extrudes sodium in exchange for external protons. This chain is Na(+)/H(+) antiporter NhaA 1, found in Mycobacterium sp. (strain JLS).